Consider the following 379-residue polypeptide: Alanine racemase (379 aa).

The active-site Proton acceptor; specific for D-alanine is Lys-37. Lys-37 is modified (N6-(pyridoxal phosphate)lysine). Residue Arg-139 participates in substrate binding. The active-site Proton acceptor; specific for L-alanine is Tyr-266. Met-314 contributes to the substrate binding site.

The protein belongs to the alanine racemase family. The cofactor is pyridoxal 5'-phosphate.

The enzyme catalyses L-alanine = D-alanine. It functions in the pathway amino-acid biosynthesis; D-alanine biosynthesis; D-alanine from L-alanine: step 1/1. In terms of biological role, catalyzes the interconversion of L-alanine and D-alanine. May also act on other amino acids. The protein is Alanine racemase (alr) of Sorangium cellulosum (strain So ce56) (Polyangium cellulosum (strain So ce56)).